Here is a 182-residue protein sequence, read N- to C-terminus: UPF0397 protein BCAH187_A2708 (182 aa).

5 consecutive transmembrane segments (helical) span residues 9-29 (VVAI…GFSI), 40-60 (AILT…IGLI), 71-91 (WGIW…MGFI), 114-134 (ITGL…DIIV), and 142-162 (IVIQ…VLGL).

It belongs to the UPF0397 family.

The protein localises to the cell membrane. The polypeptide is UPF0397 protein BCAH187_A2708 (Bacillus cereus (strain AH187)).